The chain runs to 237 residues: Undecaprenyl-diphosphatase (237 aa).

7 helical membrane passes run 38 to 58 (QTAV…LDGI), 65 to 85 (WRII…GVLF), 92 to 112 (LFSS…ILMF), 126 to 146 (MSFL…FPGI), 166 to 186 (ALQY…ILGL), 191 to 211 (VTIL…YVLS), and 217 to 237 (GKIW…YLAG).

The protein belongs to the UppP family.

It localises to the cell inner membrane. It catalyses the reaction di-trans,octa-cis-undecaprenyl diphosphate + H2O = di-trans,octa-cis-undecaprenyl phosphate + phosphate + H(+). Catalyzes the dephosphorylation of undecaprenyl diphosphate (UPP). Confers resistance to bacitracin. In Thermotoga maritima (strain ATCC 43589 / DSM 3109 / JCM 10099 / NBRC 100826 / MSB8), this protein is Undecaprenyl-diphosphatase.